A 358-amino-acid chain; its full sequence is MGSIEAAERTTVGLAAKDPSGILTPYTYTLRNTGPDDVYIKIHYCGVCHSDLHQIKNDLGMSNYPMVPGHEVVGEVLEVGSNVTRFKVGEIVGVGLLVGCCKSCRACDSEIEQYCNKKIWSYNDVYTDGKITQGGFAESTVVEQKFVVKIPEGLAPEQVAPLLCAGVTVYSPLSHFGLKTPGLRGGILGLGGVGHMGVKVAKALGHHVTVISSSDKKKKEALEDLGADNYLVSSDTVGMQEAADSLDYIIDTVPVGHPLEPYLSLLKIDGKLILMGVINTPLQFVTPMVMLGRKSITGSFVGSVKETEEMLEFWKEKGLTSMIEIVTMDYINKAFERLEKNDVRYRFVVDVKGSKFEE.

Cys-48 lines the Zn(2+) pocket. NADP(+) is bound at residue Ser-50. The Zn(2+) site is built by His-70, Glu-71, Cys-101, Cys-104, Cys-107, Cys-115, and Cys-164. Residues Thr-168, 189 to 194, 212 to 217, Thr-252, Gly-276, and 299 to 301 each bind NADP(+); these read GLGGVG, SSSDKK, and SFV.

It belongs to the zinc-containing alcohol dehydrogenase family. In terms of assembly, homodimer. Requires Zn(2+) as cofactor. Most actively expressed in stem, hypocotyl and root tissue.

It catalyses the reaction (E)-cinnamyl alcohol + NADP(+) = (E)-cinnamaldehyde + NADPH + H(+). The catalysed reaction is (E)-coniferol + NADP(+) = (E)-coniferaldehyde + NADPH + H(+). The enzyme catalyses (E)-sinapyl alcohol + NADP(+) = (E)-sinapaldehyde + NADPH + H(+). It carries out the reaction (E)-4-coumaroyl alcohol + NADP(+) = (E)-4-coumaraldehyde + NADPH + H(+). It catalyses the reaction (E)-caffeyl alcohol + NADP(+) = (E)-caffeyl aldehyde + NADPH + H(+). It participates in aromatic compound metabolism; phenylpropanoid biosynthesis. Functionally, this protein catalyzes the final step in a branch of phenylpropanoid synthesis specific for production of lignin monomers. It acts on coniferyl-, sinapyl-, 4-coumaryl- and cinnamyl-alcohol. The sequence is that of Probable cinnamyl alcohol dehydrogenase (CAD2) from Medicago sativa (Alfalfa).